A 204-amino-acid chain; its full sequence is Large ribosomal subunit protein eL15 (204 aa).

Belongs to the eukaryotic ribosomal protein eL15 family. As to quaternary structure, component of the large ribosomal subunit.

Its subcellular location is the cytoplasm. Its function is as follows. Component of the large ribosomal subunit. The ribosome is a large ribonucleoprotein complex responsible for the synthesis of proteins in the cell. The chain is Large ribosomal subunit protein eL15 (rpl15) from Monopterus albus (Swamp eel).